Consider the following 866-residue polypeptide: Protein mono-ADP-ribosyltransferase PARP9 (866 aa).

Ser42 carries the post-translational modification Phosphoserine. Macro domains follow at residues 109–298 (QRVF…ESIL) and 313–492 (ASTM…TKRS). One can recognise a PARP catalytic domain in the interval 635–853 (TNQQEKLDKM…YSSGPGMVSS (219 aa)).

Belongs to the ARTD/PARP family. Forms a stable complex with E3 ligase DTX3L; the interaction is required for PARP9 mediated ADP-ribosylation of ubiquitin. Interacts (via PARP catalytic domain) with DTX3L (via N-terminus). Forms a complex with STAT1 and DTX3L independently of IFNB1 or IFNG-mediated STAT1 'Tyr-701' phosphorylation. Forms a complex with STAT1, DTX3L and histone H2B H2BC9/H2BJ; the interaction is likely to induce H2BC9/H2BJ ubiquitination. Interacts (via N-terminus) with STAT1. Interacts with PARP14 in IFNG-stimulated macrophages; the interaction prevents PARP14-mediated STAT1 and STAT6 ADP-riboslylation. Interacts with PARP1 (when poly-ADP-ribosylated). In terms of processing, ADP-ribosylated by PARP14. Highly expressed in the thymus and intestine. Expressed in macrophages.

Its subcellular location is the cytoplasm. It localises to the cytosol. The protein resides in the nucleus. It carries out the reaction [protein]-C-terminal glycine + NAD(+) = [protein]-C-terminal O-(ADP-D-ribosyl)-glycine + nicotinamide. With respect to regulation, binding to poly(ADP-ribose) does not affect its activity. Its function is as follows. ADP-ribosyltransferase which, in association with E3 ligase DTX3L, plays a role in DNA damage repair and in immune responses including interferon-mediated antiviral defenses. Within the complex, enhances DTX3L E3 ligase activity which is further enhanced by PARP9 binding to poly(ADP-ribose). In addition, positively regulates DTXL3 protein levels. In association with DTX3L and in presence of E1 and E2 enzymes, mediates NAD(+)-dependent mono-ADP-ribosylation of ubiquitin which prevents ubiquitin conjugation to substrates such as histones. During DNA repair, PARP1 recruits PARP9/BAL1-DTX3L complex to DNA damage sites via PARP9 binding to ribosylated PARP1. Subsequent PARP1-dependent PARP9/BAL1-DTX3L-mediated ubiquitination promotes the rapid and specific recruitment of 53BP1/TP53BP1, UIMC1/RAP80, and BRCA1 to DNA damage sites. In response to DNA damage, PARP9-DTX3L complex is required for efficient non-homologous end joining (NHEJ) but the complex function is restrained by PARP9 activity. Dispensable for B-cell receptor (BCR) assembly through V(D)J recombination and class switch recombination (CSR). In macrophages, positively regulates pro-inflammatory cytokines production in response to IFNG stimulation by suppressing PARP14-mediated STAT1 ADP-ribosylation and thus promoting STAT1 phosphorylation. Also suppresses PARP14-mediated STAT6 ADP-ribosylation. In Mus musculus (Mouse), this protein is Protein mono-ADP-ribosyltransferase PARP9 (Parp9).